Consider the following 258-residue polypeptide: Thiazole synthase (258 aa).

Lys97 acts as the Schiff-base intermediate with DXP in catalysis. Residues Gly158, 184–185, and 206–207 contribute to the 1-deoxy-D-xylulose 5-phosphate site; these read AG and NT.

This sequence belongs to the ThiG family. As to quaternary structure, homotetramer. Forms heterodimers with either ThiH or ThiS.

It is found in the cytoplasm. It carries out the reaction [ThiS sulfur-carrier protein]-C-terminal-Gly-aminoethanethioate + 2-iminoacetate + 1-deoxy-D-xylulose 5-phosphate = [ThiS sulfur-carrier protein]-C-terminal Gly-Gly + 2-[(2R,5Z)-2-carboxy-4-methylthiazol-5(2H)-ylidene]ethyl phosphate + 2 H2O + H(+). The protein operates within cofactor biosynthesis; thiamine diphosphate biosynthesis. In terms of biological role, catalyzes the rearrangement of 1-deoxy-D-xylulose 5-phosphate (DXP) to produce the thiazole phosphate moiety of thiamine. Sulfur is provided by the thiocarboxylate moiety of the carrier protein ThiS. In vitro, sulfur can be provided by H(2)S. The sequence is that of Thiazole synthase from Marinomonas sp. (strain MWYL1).